A 79-amino-acid polypeptide reads, in one-letter code: Acyl carrier protein (79 aa).

One can recognise a Carrier domain in the interval 2-77 (SDVAERVKKI…DAIDFIKANA (76 aa)). At serine 37 the chain carries O-(pantetheine 4'-phosphoryl)serine.

The protein belongs to the acyl carrier protein (ACP) family. In terms of processing, 4'-phosphopantetheine is transferred from CoA to a specific serine of apo-ACP by AcpS. This modification is essential for activity because fatty acids are bound in thioester linkage to the sulfhydryl of the prosthetic group.

It localises to the cytoplasm. The protein operates within lipid metabolism; fatty acid biosynthesis. Carrier of the growing fatty acid chain in fatty acid biosynthesis. The chain is Acyl carrier protein from Azospirillum brasilense.